Reading from the N-terminus, the 159-residue chain is Dehydratase GME11372 (159 aa).

Active-site residues include His-79 and His-104.

This sequence belongs to the scytalone dehydratase family. As to quaternary structure, homotrimer. Each subunit contains an active site, located in the central part of the hydrophobic core of the monomer, which functions independently.

It participates in secondary metabolite biosynthesis. In terms of biological role, dehydratase; part of the gene cluster that mediates the biosynthesis of dibenzodioxocinones such as pestalotiollide B, a novel class of inhibitors against cholesterol ester transfer protein (CEPT). The biosynthesis initiates from condensation of acetate and malonate units catalyzed by the non-reducing PKS pks8/GME11356. Pks8/GME11356 lacks a thioesterase (TE) domain, which is important to the cyclizing of the third ring of atrochrysone carboxylic acid, and the esterase GME11355 might play the role of TE and catalyzes the cyclization reaction of the C ring. The lactamase-like protein GME11357 (or other beta-lactamases in Pestalotiopsis microspora) probably hydrolyzes the thioester bond between the ACP of pks8/GME11356 and the intermediate to release atrochrysone carboxylic acid, which is spontaneously dehydrates to form endocrocin anthrone. Endocrocin anthrone is further converted to emodin via the endocrocin intermediate. Emodin is then oxidized by several enzymes such as the Baeyer-Villiger oxidase GME11358, the oxidoreductase GME11367, the short chain dehydrogenase/reductase GME11373, as well as by other oxidoreductases from the cluster, to modify the A and C rings and open the B ring, and finally yield monodictyphenone. The prenyltransferase GME11375 may catalyze the addition reaction between the C5 side chains and the carbon bone of dibenzodioxocinones. The remaining biochemical reactions to the final product dibenzodioxocinones should be methylation catalyzed by methyltransferase GME11366 and reduction and lactonization reaction catalyzed by a series of oxidordeuctases. This is Dehydratase GME11372 from Pestalotiopsis microspora.